Reading from the N-terminus, the 284-residue chain is Tropomyosin (284 aa).

A coiled-coil region spans residues methionine 1–tyrosine 284. The disordered stretch occupies residues threonine 111–glutamate 131.

It belongs to the tropomyosin family. As to quaternary structure, homodimer.

Its function is as follows. Tropomyosin, in association with the troponin complex, plays a central role in the calcium dependent regulation of muscle contraction. This is Tropomyosin from Schistosoma haematobium (Blood fluke).